A 90-amino-acid polypeptide reads, in one-letter code: Small regulatory polypeptide of amino acid response (90 aa).

The Lumenal portion of the chain corresponds to methionine 1 to threonine 18. The chain crosses the membrane as a helical span at residues alanine 19–cysteine 39. Residues cysteine 40 to methionine 90 are Cytoplasmic-facing.

In terms of assembly, interacts with components of the lysosomal V-ATPase complex. Interacts with ATP6V0A1. Interacts with ATP6V0A2. Highly expressed in lung, heart and skeletal muscle.

It localises to the late endosome membrane. It is found in the lysosome membrane. Functionally, negative regulator of amino acid sensing and mTORC1, a signaling complex promoting cell growth in response to growth factors, energy levels and amino acids. Negatively regulates mTORC1 activation by inhibiting recruitment of mTORC1 to lysosomes upon stimulation with amino acids: acts by promoting the formation of a tightly bound supercomplex composed of the lysosomal V-ATPase, Ragulator and Rag GTPases, preventing recruitment of mTORC1. Acts as a regulator of muscle regeneration following injury by regulating mTORC1 activation. The protein is Small regulatory polypeptide of amino acid response of Homo sapiens (Human).